Consider the following 33-residue polypeptide: Protamine-1B (33 aa).

Residues 1–33 (PRRRRRRSSSRPIRRRRPRRVSRRRRRGGRRRR) are disordered.

In terms of tissue distribution, testis.

The protein localises to the nucleus. It is found in the chromosome. Functionally, protamines substitute for histones in the chromatin of sperm during the haploid phase of spermatogenesis. They compact sperm DNA into a highly condensed, stable and inactive complex. The chain is Protamine-1B from Oncorhynchus mykiss (Rainbow trout).